A 188-amino-acid chain; its full sequence is Putative manganese efflux pump MntP (188 aa).

Transmembrane regions (helical) follow at residues 3 to 23, 39 to 59, 65 to 85, 110 to 130, 131 to 151, and 167 to 187; these read LFSL…VSIC, AGLY…LLGV, ITDY…VNML, LGFA…FLSV, DIYS…IIGV, and ILGG…HTLF.

This sequence belongs to the MntP (TC 9.B.29) family.

The protein resides in the cell inner membrane. Its function is as follows. Probably functions as a manganese efflux pump. This Mannheimia succiniciproducens (strain KCTC 0769BP / MBEL55E) protein is Putative manganese efflux pump MntP.